A 184-amino-acid chain; its full sequence is Tumor necrosis factor alpha-induced protein 8-like protein 2 (184 aa).

S3 carries the phosphoserine modification.

This sequence belongs to the TNFAIP8 family. TNFAIP8L2 subfamily. In terms of assembly, may interact with CASP8; however, such result is unclear since could not reproduce the interaction with CASP8. Interacts with RAC1. Phosphorylated by TAK1/MAP3K7; this phosphorylation triggers association with BTRC and subsequent ubiquitination and degradation. In terms of processing, ubiquitinated in a BTRC-depdent manner; leading to degradation mediated through the proteasome pathway.

The protein resides in the cytoplasm. Its subcellular location is the nucleus. It is found in the lysosome. Functionally, acts as a negative regulator of innate and adaptive immunity by maintaining immune homeostasis. Plays a regulatory role in the Toll-like signaling pathway by determining the strength of LPS-induced signaling and gene expression. Inhibits TCR-mediated T-cell activation and negatively regulate T-cell function to prevent hyperresponsiveness. Also inhibits autolysosome formation via negatively modulating MTOR activation by interacting with RAC1 and promoting the disassociation of the RAC1-MTOR complex. Plays an essential role in NK-cell biology by acting as a checkpoint and displaying an expression pattern correlating with NK-cell maturation process and by negatively regulating NK-cell maturation and antitumor immunity. Mechanistically, suppresses IL-15-triggered mTOR activity in NK-cells. The protein is Tumor necrosis factor alpha-induced protein 8-like protein 2 (Tnfaip8l2) of Rattus norvegicus (Rat).